The primary structure comprises 100 residues: MIGKQATLCDIVLEELVLPIDLHCHEELPELPEELEESVVEEEPEYTPYKIVVYCGGCDTKLKLYILATLSGIRDFQTSLLGPVKLLCPTCREEIRNGRR.

An E7 terminal domain region spans residues 1–43; that stretch reads MIGKQATLCDIVLEELVLPIDLHCHEELPELPEELEESVVEEE. Residues 22–26 carry the LXCXE motif; interaction with host RB1 and TMEM173/STING motif; it reads LHCHE. A zinc finger lies at 55–91; sequence CGGCDTKLKLYILATLSGIRDFQTSLLGPVKLLCPTC. A Nuclear export signal motif is present at residues 73-81; that stretch reads IRDFQTSLL.

It belongs to the papillomaviridae E7 protein family. In terms of assembly, homodimer. Homooligomer. Interacts with host RB1; this interaction induces dissociation of RB1-E2F1 complex thereby disrupting RB1 activity. Interacts with host EP300; this interaction represses EP300 transcriptional activity. Interacts with protein E2; this interaction inhibits E7 oncogenic activity. Interacts with host TMEM173/STING; this interaction impairs the ability of TMEM173/STING to sense cytosolic DNA and promote the production of type I interferon (IFN-alpha and IFN-beta). In terms of processing, highly phosphorylated.

The protein resides in the host cytoplasm. The protein localises to the host nucleus. Functionally, plays a role in viral genome replication by driving entry of quiescent cells into the cell cycle. Stimulation of progression from G1 to S phase allows the virus to efficiently use the cellular DNA replicating machinery to achieve viral genome replication. E7 protein has both transforming and trans-activating activities. Induces the disassembly of the E2F1 transcription factor from RB1, with subsequent transcriptional activation of E2F1-regulated S-phase genes. Interferes with host histone deacetylation mediated by HDAC1 and HDAC2, leading to transcription activation. Also plays a role in the inhibition of both antiviral and antiproliferative functions of host interferon alpha. Interaction with host TMEM173/STING impairs the ability of TMEM173/STING to sense cytosolic DNA and promote the production of type I interferon (IFN-alpha and IFN-beta). The chain is Protein E7 from Human papillomavirus 22.